A 79-amino-acid polypeptide reads, in one-letter code: MIDSLTTLMIYFFLPVSYLLVGFVIMYYTREAFKKHMLENMVSPMWQNYVFVMILLIWPFFLFLVVTTTILKLFKAVVN.

Transmembrane regions (helical) follow at residues 8-28 and 50-70; these read LMIY…IMYY and VFVM…TTTI.

The protein resides in the host membrane. The protein is Putative transmembrane protein ORF17 of Haloarcula hispanica (His1V).